A 513-amino-acid polypeptide reads, in one-letter code: Ribonuclease Y (513 aa).

The helical transmembrane segment at 4–24 threads the bilayer; it reads NTAIIIAITTGFVAFIGGYFL. A KH domain is found at 203 to 266; the sequence is TVAVIPLPNE…ETARMALEKL (64 aa). The HD domain maps to 329-422; it reads VLKHSVEVAY…IQAADAISAA (94 aa).

This sequence belongs to the RNase Y family.

Its subcellular location is the cell membrane. Functionally, endoribonuclease that initiates mRNA decay. This chain is Ribonuclease Y, found in Desulforudis audaxviator (strain MP104C).